We begin with the raw amino-acid sequence, 313 residues long: Endo-beta-N-acetylglucosaminidase H (313 aa).

Residues 1–42 constitute a signal peptide (or 44); sequence MFTPVRRRVRTAALALSAAAALVLGSTAASGASATPSPAPAP. In terms of domain architecture, GH18 spans 51–307; the sequence is PTSVAYVEVN…SAFTRELYGS (257 aa). The Proton donor role is filled by Glu174.

This sequence belongs to the glycosyl hydrolase 18 family.

It carries out the reaction an N(4)-(oligosaccharide-(1-&gt;3)-[oligosaccharide-(1-&gt;6)]-beta-D-Man-(1-&gt;4)-beta-D-GlcNAc-(1-&gt;4)-alpha-D-GlcNAc)-L-asparaginyl-[protein] + H2O = an oligosaccharide-(1-&gt;3)-[oligosaccharide-(1-&gt;6)]-beta-D-Man-(1-&gt;4)-D-GlcNAc + N(4)-(N-acetyl-beta-D-glucosaminyl)-L-asparaginyl-[protein]. Cleaves asparagine-linked oligomannose and hybrid, but not complex, oligosaccharides from glycoproteins. The sequence is that of Endo-beta-N-acetylglucosaminidase H from Streptomyces plicatus.